Reading from the N-terminus, the 179-residue chain is Large ribosomal subunit protein uL5 (179 aa).

This sequence belongs to the universal ribosomal protein uL5 family. As to quaternary structure, part of the 50S ribosomal subunit; part of the 5S rRNA/L5/L18/L25 subcomplex. Contacts the 5S rRNA and the P site tRNA. Forms a bridge to the 30S subunit in the 70S ribosome.

Its function is as follows. This is one of the proteins that bind and probably mediate the attachment of the 5S RNA into the large ribosomal subunit, where it forms part of the central protuberance. In the 70S ribosome it contacts protein S13 of the 30S subunit (bridge B1b), connecting the 2 subunits; this bridge is implicated in subunit movement. Contacts the P site tRNA; the 5S rRNA and some of its associated proteins might help stabilize positioning of ribosome-bound tRNAs. This chain is Large ribosomal subunit protein uL5, found in Desulforapulum autotrophicum (strain ATCC 43914 / DSM 3382 / VKM B-1955 / HRM2) (Desulfobacterium autotrophicum).